A 274-amino-acid chain; its full sequence is Bis(5'-nucleosyl)-tetraphosphatase, symmetrical (274 aa).

Belongs to the Ap4A hydrolase family.

The enzyme catalyses P(1),P(4)-bis(5'-adenosyl) tetraphosphate + H2O = 2 ADP + 2 H(+). Hydrolyzes diadenosine 5',5'''-P1,P4-tetraphosphate to yield ADP. In Shewanella sp. (strain MR-7), this protein is Bis(5'-nucleosyl)-tetraphosphatase, symmetrical.